A 565-amino-acid polypeptide reads, in one-letter code: Periplasmic trehalase (565 aa).

The first 30 residues, 1–30 (MKSPAPSRPQKMALIPACIFLCFAALSVQA), serve as a signal peptide directing secretion. Substrate-binding positions include Arg152, 159–160 (WD), Asn196, 205–207 (RSQ), 277–279 (RPE), and Gly310. Active-site proton donor/acceptor residues include Asp312 and Glu496. Glu511 is a substrate binding site. The segment at 539 to 565 (CDNVPATRPLSESTTQPLKQKEAEPTP) is disordered.

The protein belongs to the glycosyl hydrolase 37 family. In terms of assembly, monomer.

It localises to the periplasm. The catalysed reaction is alpha,alpha-trehalose + H2O = alpha-D-glucose + beta-D-glucose. Provides the cells with the ability to utilize trehalose at high osmolarity by splitting it into glucose molecules that can subsequently be taken up by the phosphotransferase-mediated uptake system. In Escherichia coli O1:K1 / APEC, this protein is Periplasmic trehalase.